We begin with the raw amino-acid sequence, 215 residues long: Intraflagellar transport protein 43 homolog B (215 aa).

The segment at 1 to 107 (MDDHLKLGDS…SDGEGDIPVI (107 aa)) is disordered.

Belongs to the IFT43 family. As to quaternary structure, component of IFT complex A.

Component of IFT complex A (IFT-A) involved in retrograde ciliary transport along microtubules from the ciliary tip to the base. The protein is Intraflagellar transport protein 43 homolog B (ift43b) of Salmo salar (Atlantic salmon).